Reading from the N-terminus, the 656-residue chain is UvrABC system protein B (656 aa).

Residues 23–180 (EGIKKGYRFQ…QHLAKIGYER (158 aa)) enclose the Helicase ATP-binding domain. Position 36 to 43 (36 to 43 (GVTGSGKT)) interacts with ATP. The Beta-hairpin motif lies at 89–112 (YYDYYQPEAYVPTKDLYIEKNADI). In terms of domain architecture, Helicase C-terminal spans 426–588 (QVDDLISEIK…ITPKTIVKPL (163 aa)). The UVR domain occupies 614-649 (EEYLSLLEEEMYRAASELRYEDAAKLRDEIFRLREE).

The protein belongs to the UvrB family. Forms a heterotetramer with UvrA during the search for lesions. Interacts with UvrC in an incision complex.

Its subcellular location is the cytoplasm. Its function is as follows. The UvrABC repair system catalyzes the recognition and processing of DNA lesions. A damage recognition complex composed of 2 UvrA and 2 UvrB subunits scans DNA for abnormalities. Upon binding of the UvrA(2)B(2) complex to a putative damaged site, the DNA wraps around one UvrB monomer. DNA wrap is dependent on ATP binding by UvrB and probably causes local melting of the DNA helix, facilitating insertion of UvrB beta-hairpin between the DNA strands. Then UvrB probes one DNA strand for the presence of a lesion. If a lesion is found the UvrA subunits dissociate and the UvrB-DNA preincision complex is formed. This complex is subsequently bound by UvrC and the second UvrB is released. If no lesion is found, the DNA wraps around the other UvrB subunit that will check the other stand for damage. This is UvrABC system protein B from Pseudothermotoga lettingae (strain ATCC BAA-301 / DSM 14385 / NBRC 107922 / TMO) (Thermotoga lettingae).